Here is a 121-residue protein sequence, read N- to C-terminus: Basic phospholipase A2 homolog blK-PLA2 (121 aa).

7 disulfides stabilise this stretch: cysteine 26-cysteine 115, cysteine 28-cysteine 44, cysteine 43-cysteine 95, cysteine 49-cysteine 121, cysteine 50-cysteine 88, cysteine 57-cysteine 81, and cysteine 75-cysteine 86. Positions 105–117 (KKYRYHLKPFCKK) are important for membrane-damaging activities in eukaryotes and bacteria; heparin-binding.

It belongs to the phospholipase A2 family. Group II subfamily. K49 sub-subfamily. In terms of assembly, homodimer; non-covalently linked. As to expression, expressed by the venom gland.

It localises to the secreted. Its function is as follows. Snake venom phospholipase A2 (PLA2) homolog that lacks enzymatic activity. Shows myotoxic and edema-inducing activities in vivo. A model of myotoxic mechanism has been proposed: an apo Lys49-PLA2 is activated by the entrance of a hydrophobic molecule (e.g. fatty acid) at the hydrophobic channel of the protein leading to a reorientation of a monomer. This reorientation causes a transition between 'inactive' to 'active' states, causing alignment of C-terminal and membrane-docking sites (MDoS) side-by-side and putting the membrane-disruption sites (MDiS) in the same plane, exposed to solvent and in a symmetric position for both monomers. The MDoS region stabilizes the toxin on membrane by the interaction of charged residues with phospholipid head groups. Subsequently, the MDiS region destabilizes the membrane with penetration of hydrophobic residues. This insertion causes a disorganization of the membrane, allowing an uncontrolled influx of ions (i.e. calcium and sodium), and eventually triggering irreversible intracellular alterations and cell death. This Bothrops leucurus (Whitetail lancehead) protein is Basic phospholipase A2 homolog blK-PLA2.